The chain runs to 402 residues: Multidrug resistance protein MdtH (402 aa).

Residues Met1 to Lys12 are Cytoplasmic-facing. A helical transmembrane segment spans residues Tyr13–Ile33. Residues Ser34 to Glu98 lie on the Periplasmic side of the membrane. Residues Pro99–Phe116 traverse the membrane as a helical segment. Residues Asp117–Ser138 lie on the Cytoplasmic side of the membrane. Residues Leu139–Leu159 form a helical membrane-spanning segment. Topologically, residues Gln160–Arg164 are periplasmic. The chain crosses the membrane as a helical span at residues Leu165–Leu185. Residues Pro186–Tyr213 lie on the Cytoplasmic side of the membrane. The chain crosses the membrane as a helical span at residues Val214–Met234. Residues Val235 to Ser243 are Periplasmic-facing. A helical membrane pass occupies residues Ala244 to Ala264. The Cytoplasmic portion of the chain corresponds to Arg265–Arg276. The chain crosses the membrane as a helical span at residues Leu277–Leu297. Over Gln298–Gln299 the chain is Periplasmic. A helical transmembrane segment spans residues Leu300–Thr320. Topologically, residues Leu321–Arg339 are cytoplasmic. The chain crosses the membrane as a helical span at residues Leu340 to Gly360. The Periplasmic segment spans residues Lys361 to Glu367. Residues Leu368 to Phe388 form a helical membrane-spanning segment. The Cytoplasmic portion of the chain corresponds to Ser389–Ala402.

It belongs to the major facilitator superfamily. DHA1 family. MdtH (TC 2.A.1.2.21) subfamily.

Its subcellular location is the cell inner membrane. Confers resistance to norfloxacin and enoxacin. The protein is Multidrug resistance protein MdtH of Escherichia coli O9:H4 (strain HS).